Reading from the N-terminus, the 276-residue chain is ATP synthase subunit a (276 aa).

A run of 6 helical transmembrane segments spans residues 47–67 (WHID…WLFY), 107–127 (IAPL…MDLI), 152–172 (DLNV…FYSI), 188–208 (PFNH…TLVA), 226–246 (LIFI…SVPW), and 247–267 (AIFH…LTIV).

The protein belongs to the ATPase A chain family. F-type ATPases have 2 components, CF(1) - the catalytic core - and CF(0) - the membrane proton channel. CF(1) has five subunits: alpha(3), beta(3), gamma(1), delta(1), epsilon(1). CF(0) has three main subunits: a(1), b(2) and c(9-12). The alpha and beta chains form an alternating ring which encloses part of the gamma chain. CF(1) is attached to CF(0) by a central stalk formed by the gamma and epsilon chains, while a peripheral stalk is formed by the delta and b chains.

It is found in the cell inner membrane. Functionally, key component of the proton channel; it plays a direct role in the translocation of protons across the membrane. In Shewanella pealeana (strain ATCC 700345 / ANG-SQ1), this protein is ATP synthase subunit a.